The primary structure comprises 71 residues: Vitellogenin-B2 (71 aa).

The N-terminal stretch at M1–C15 is a signal peptide. The region spanning F24 to K71 is the Vitellogenin domain.

As to expression, produced by the liver, secreted into the blood and then sequestered by receptor mediated endocytosis into growing oocytes, where it is generally cleaved, giving rise to the respective yolk components.

Functionally, precursor of the major egg-yolk proteins that are sources of nutrients during early development of oviparous organisms. This chain is Vitellogenin-B2, found in Xenopus laevis (African clawed frog).